Consider the following 292-residue polypeptide: Bifunctional protein FolD (292 aa).

NADP(+) contacts are provided by residues 166–168, Ser-191, and Ile-232; that span reads GRS.

This sequence belongs to the tetrahydrofolate dehydrogenase/cyclohydrolase family. In terms of assembly, homodimer.

It catalyses the reaction (6R)-5,10-methylene-5,6,7,8-tetrahydrofolate + NADP(+) = (6R)-5,10-methenyltetrahydrofolate + NADPH. The enzyme catalyses (6R)-5,10-methenyltetrahydrofolate + H2O = (6R)-10-formyltetrahydrofolate + H(+). Its pathway is one-carbon metabolism; tetrahydrofolate interconversion. In terms of biological role, catalyzes the oxidation of 5,10-methylenetetrahydrofolate to 5,10-methenyltetrahydrofolate and then the hydrolysis of 5,10-methenyltetrahydrofolate to 10-formyltetrahydrofolate. The protein is Bifunctional protein FolD of Wolbachia sp. subsp. Drosophila simulans (strain wRi).